Consider the following 599-residue polypeptide: Leishmanolysin (599 aa).

The N-terminal stretch at 1–39 (MSVDSSSTHRHRSVAARLVRLAAAGAAVIAAVGTAAAWA) is a signal peptide. The propeptide at 40-97 (HAGAVQHRCIHDAMQARVRQSVARHHTAPGAVSAVGLPYVTLDTAAAADRRPGSAPTV) is activation peptide. Disulfide bonds link Cys-122-Cys-139 and Cys-188-Cys-227. His-261 contributes to the Zn(2+) binding site. Glu-262 is an active-site residue. Position 265 (His-265) interacts with Zn(2+). Residue Asn-297 is glycosylated (N-linked (GlcNAc...) asparagine). Intrachain disulfides connect Cys-311/Cys-383, Cys-390/Cys-452, Cys-403/Cys-422, Cys-412/Cys-486, Cys-463/Cys-507, Cys-512/Cys-562, and Cys-532/Cys-555. Residue His-331 coordinates Zn(2+). Asn-394 carries an N-linked (GlcNAc...) asparagine glycan. Asn-574 carries the GPI-anchor amidated asparagine lipid modification. A propeptide spans 575 to 599 (AAAGRRGPRAAATALLVAALLAVAL) (removed in mature form).

It belongs to the peptidase M8 family. Zn(2+) is required as a cofactor.

The protein resides in the cell membrane. It catalyses the reaction Preference for hydrophobic residues at P1 and P1' and basic residues at P2' and P3'. A model nonapeptide is cleaved at -Ala-Tyr-|-Leu-Lys-Lys-.. Has an integral role during the infection of macrophages in the mammalian host. In Leishmania chagasi, this protein is Leishmanolysin (gp63).